Here is a 370-residue protein sequence, read N- to C-terminus: Putative agmatine deiminase (370 aa).

Cys361 acts as the Amidino-cysteine intermediate in catalysis.

Belongs to the agmatine deiminase family.

The enzyme catalyses agmatine + H2O = N-carbamoylputrescine + NH4(+). This chain is Putative agmatine deiminase, found in Shewanella baltica (strain OS195).